A 470-amino-acid polypeptide reads, in one-letter code: Tigger transposable element-derived protein 3 (470 aa).

The region spanning 3-55 is the HTH psq-type domain; that stretch reads LNTKKKLHALSLAEKIQVLELLDESKMSQSEVARRFQVSQPQISRICKNKEKL. DNA-binding regions (H-T-H motif) lie at residues 31–51 and 100–130; these read QSEV…ICKN and PMLL…WKRR. The HTH CENPB-type domain occupies 67 to 137; the sequence is ERKRKRESKY…KRRNNVGFGT (71 aa). Positions 167–360 constitute a DDE-1 domain; the sequence is FSPEDVFGCA…VPRQLILSSF (194 aa). The span at 402–421 shows a compositional bias: basic and acidic residues; sequence DPGPRVCKEETGTEDSGREE. The tract at residues 402 to 426 is disordered; the sequence is DPGPRVCKEETGTEDSGREEDGFEP.

This sequence belongs to the tigger transposable element derived protein family.

It is found in the nucleus. This is Tigger transposable element-derived protein 3 (Tigd3) from Mus musculus (Mouse).